A 199-amino-acid polypeptide reads, in one-letter code: Ribonuclease HI (199 aa).

Residues 1–68 (MPVVECDIQT…TAVVQPDRGG (68 aa)) form a not required for RNase H activity region. Positions 66-197 (RGGRVHAYFD…ADALANEALD (132 aa)) constitute an RNase H type-1 domain. Residues 69–199 (RVHAYFDGAS…ALANEALDDA (131 aa)) form an as active as intact RNase H region. Residues Asp-75, Glu-115, Asp-139, and Asp-189 each coordinate Mg(2+). Mn(2+) is bound by residues Asp-75, Glu-115, Asp-139, and Asp-189.

It belongs to the RNase H family. Mn(2+) serves as cofactor. It depends on Mg(2+) as a cofactor. Co(2+) is required as a cofactor. The cofactor is Ni(2+).

It is found in the cytoplasm. The enzyme catalyses Endonucleolytic cleavage to 5'-phosphomonoester.. In terms of biological role, nuclease that specifically degrades the RNA of RNA-DNA hybrids; seems to act exonucleolytically on RNA/DNA hybrids. Endonucleolytically removes RNA primers from the Okazaki fragments of lagging strand synthesis on its own. Complements the temperature-sensitive phenotype of an E.coli double rnhA/rnhB (RNase H) disruption mutant. The chain is Ribonuclease HI (rnhA) from Halobacterium salinarum (strain ATCC 700922 / JCM 11081 / NRC-1) (Halobacterium halobium).